A 113-amino-acid chain; its full sequence is Gonadotropin subunit beta (113 aa).

6 disulfide bridges follow: Cys-6-Cys-54, Cys-20-Cys-69, Cys-23-Cys-107, Cys-31-Cys-85, Cys-35-Cys-87, and Cys-90-Cys-97. Asn-10 is a glycosylation site (N-linked (GlcNAc...) asparagine).

The protein belongs to the glycoprotein hormones subunit beta family. Heterodimer of an alpha and a beta chain.

Its subcellular location is the secreted. Involved in gametogenesis and steroidogenesis. This chain is Gonadotropin subunit beta (cgb), found in Muraenesox cinereus (Daggertooth pike conger).